A 150-amino-acid chain; its full sequence is 3-dehydroquinate dehydratase (150 aa).

Tyr-23 serves as the catalytic Proton acceptor. 3 residues coordinate substrate: Asn-79, His-85, and Asp-92. His-105 functions as the Proton donor in the catalytic mechanism. Substrate-binding positions include 106–107 (IS) and Arg-116.

This sequence belongs to the type-II 3-dehydroquinase family. Homododecamer.

It carries out the reaction 3-dehydroquinate = 3-dehydroshikimate + H2O. Its pathway is metabolic intermediate biosynthesis; chorismate biosynthesis; chorismate from D-erythrose 4-phosphate and phosphoenolpyruvate: step 3/7. Its function is as follows. Catalyzes a trans-dehydration via an enolate intermediate. This chain is 3-dehydroquinate dehydratase, found in Marinomonas sp. (strain MWYL1).